Here is a 455-residue protein sequence, read N- to C-terminus: Gamma-glutamyl phosphate reductase (455 aa).

This sequence belongs to the gamma-glutamyl phosphate reductase family.

It localises to the cytoplasm. The enzyme catalyses L-glutamate 5-semialdehyde + phosphate + NADP(+) = L-glutamyl 5-phosphate + NADPH + H(+). Its pathway is amino-acid biosynthesis; L-proline biosynthesis; L-glutamate 5-semialdehyde from L-glutamate: step 2/2. Functionally, catalyzes the NADPH-dependent reduction of L-glutamate 5-phosphate into L-glutamate 5-semialdehyde and phosphate. The product spontaneously undergoes cyclization to form 1-pyrroline-5-carboxylate. The chain is Gamma-glutamyl phosphate reductase from Synechococcus sp. (strain JA-2-3B'a(2-13)) (Cyanobacteria bacterium Yellowstone B-Prime).